A 321-amino-acid polypeptide reads, in one-letter code: Olfactory receptor 52P1 (321 aa).

Over M1–L27 the chain is Extracellular. The N-linked (GlcNAc...) asparagine glycan is linked to N5. A helical transmembrane segment spans residues W28–L48. Residues V49–V56 are Cytoplasmic-facing. The helical transmembrane segment at L57–V77 threads the bilayer. The Extracellular segment spans residues S78–A101. A disulfide bond links C99 and C191. Residues Q102–F122 traverse the membrane as a helical segment. At D123 to T141 the chain is on the cytoplasmic side. A helical membrane pass occupies residues I142–P162. The Extracellular portion of the chain corresponds to F163–R198. A helical transmembrane segment spans residues V199–S219. The Cytoplasmic segment spans residues Y220–A239. A helical transmembrane segment spans residues L240 to S260. The Extracellular portion of the chain corresponds to F261–H275. A helical transmembrane segment spans residues I276–V296. Over K297–M315 the chain is Cytoplasmic.

The protein belongs to the G-protein coupled receptor 1 family.

The protein localises to the cell membrane. In terms of biological role, odorant receptor. The sequence is that of Olfactory receptor 52P1 from Homo sapiens (Human).